The chain runs to 208 residues: Small ribosomal subunit protein uS3 (208 aa).

The KH type-2 domain maps to 16 to 85 (IDEYFKKELS…KPQIDVKPVE (70 aa)).

This sequence belongs to the universal ribosomal protein uS3 family. As to quaternary structure, part of the 30S ribosomal subunit.

Functionally, binds the lower part of the 30S subunit head. The chain is Small ribosomal subunit protein uS3 from Methanocaldococcus jannaschii (strain ATCC 43067 / DSM 2661 / JAL-1 / JCM 10045 / NBRC 100440) (Methanococcus jannaschii).